Reading from the N-terminus, the 184-residue chain is Cytidylate kinase (184 aa).

Residue 8-16 (GQPGSGKTT) coordinates ATP.

Belongs to the cytidylate kinase family. Type 2 subfamily.

The protein resides in the cytoplasm. The enzyme catalyses CMP + ATP = CDP + ADP. The catalysed reaction is dCMP + ATP = dCDP + ADP. The protein is Cytidylate kinase of Pyrobaculum islandicum (strain DSM 4184 / JCM 9189 / GEO3).